A 248-amino-acid chain; its full sequence is tRNA (guanine-N(1)-)-methyltransferase (248 aa).

S-adenosyl-L-methionine contacts are provided by residues Gly-113 and 133-138 (VGDYVL).

The protein belongs to the RNA methyltransferase TrmD family. Homodimer.

It is found in the cytoplasm. It catalyses the reaction guanosine(37) in tRNA + S-adenosyl-L-methionine = N(1)-methylguanosine(37) in tRNA + S-adenosyl-L-homocysteine + H(+). Functionally, specifically methylates guanosine-37 in various tRNAs. The polypeptide is tRNA (guanine-N(1)-)-methyltransferase (Shewanella sp. (strain W3-18-1)).